The sequence spans 446 residues: tRNA-2-methylthio-N(6)-dimethylallyladenosine synthase (446 aa).

Positions 3–119 (KKIFIKTFGC…INEAILNHLK (117 aa)) constitute an MTTase N-terminal domain. Residues Cys12, Cys48, Cys82, Cys158, Cys162, and Cys165 each coordinate [4Fe-4S] cluster. Residues 144-374 (KDSKVSSFLT…QEKLFNNQIK (231 aa)) enclose the Radical SAM core domain. Positions 377 to 439 (KSLENKILNV…QNSLFGKLTE (63 aa)) constitute a TRAM domain.

Belongs to the methylthiotransferase family. MiaB subfamily. Monomer. [4Fe-4S] cluster is required as a cofactor.

The protein resides in the cytoplasm. The catalysed reaction is N(6)-dimethylallyladenosine(37) in tRNA + (sulfur carrier)-SH + AH2 + 2 S-adenosyl-L-methionine = 2-methylsulfanyl-N(6)-dimethylallyladenosine(37) in tRNA + (sulfur carrier)-H + 5'-deoxyadenosine + L-methionine + A + S-adenosyl-L-homocysteine + 2 H(+). Functionally, catalyzes the methylthiolation of N6-(dimethylallyl)adenosine (i(6)A), leading to the formation of 2-methylthio-N6-(dimethylallyl)adenosine (ms(2)i(6)A) at position 37 in tRNAs that read codons beginning with uridine. This is tRNA-2-methylthio-N(6)-dimethylallyladenosine synthase from Pelagibacter ubique (strain HTCC1062).